Here is a 168-residue protein sequence, read N- to C-terminus: Myosin regulatory light chain 11 (168 aa).

The residue at position 2 (Ala-2) is a N,N,N-trimethylalanine. Ser-15 bears the Phosphoserine mark. 3 consecutive EF-hand domains span residues Thr-24–Leu-59, Asp-94–Arg-129, and Phe-130–Lys-165. Positions 37, 39, 41, and 48 each coordinate Ca(2+).

Myosin is a hexamer of 2 heavy chains and 4 light chains. Post-translationally, the N-terminus is blocked. N,N,N-trimethylalanine, found in other myosin light chains would not have been detected in the N-terminal tryptic peptide in PubMed:7358336 because it would remain trimethylated and ninhydrin negative after hydrolysis.

Myosin regulatory subunit that plays an essential to maintain muscle integrity during early development. Plays a role in muscle contraction. The chain is Myosin regulatory light chain 11 (MYL11) from Gallus gallus (Chicken).